The sequence spans 821 residues: MPTVISPTVAPRTGAEPRSPGPVPHPAQGKTTEAGGGHPGGIYSAIISRNFPIIGVKEKTFEQLHKKCLEKKVLYLDPEFPPDETSLFYSQKFPIQFVWKRPPEICENPRFIIGGANRTDICQGDLGDCWLLAAIACLTLNERLLFRVIPHDQSFTENYAGIFHFQFWRYGDWVDVVIDDCLPTYNNQLVFTKSNHRNEFWSALLEKAYAKLHGSYEALKGGNTTEAMEDFTGGVTEFFEIKDAPSDMYKIMRKAIERGSLMGCSIDDGTNMTYGTSPSGLNMGELIARMVRNMDNSLLRDSDLDPRASDDRPSRTIVPVQYETRMACGLVKGHAYSVTGLEEALFKGEKVKLVRLRNPWGQVEWNGSWSDGWKDWSFVDKDEKARLQHQVTEDGEFWMSYDDFVYHFTKLEICNLTADALESDKLQTWTVSVNEGRWVRGCSAGGCRNFPDTFWTNPQYRLKLLEEDDDPDDSEVICSFLVALMQKNRRKDRKLGANLFTIGFAIYEVPKEMHGNKQHLQKDFFLYNASKARSKTYINMREVSQRFRLPPSEYVIVPSTYEPHQEGEFILRVFSEKRNLSEEAENTISVDRPVKKKKNKPIIFVSDRANSNKELGVDQEAEEGKDKTGPDKQGESPQPRPGHTDQESEEQQQFRNIFRQIAGDDMEICADELKNVLNTVVNKHKDLKTQGFTLESCRSMIALMDTDGSGRLNLQEFHHLWKKIKAWQKIFKHYDTDHSGTINSYEMRNAVNDAGFHLNSQLYDIITMRYADKHMNIDFDSFICCFVRLEGMFRAFHAFDKDGDGIIKLNVLEWLQLTMYA.

A disordered region spans residues 1–37 (MPTVISPTVAPRTGAEPRSPGPVPHPAQGKTTEAGGG). The region spanning 74 to 417 (LYLDPEFPPD…FTKLEICNLT (344 aa)) is the Calpain catalytic domain. Residues Cys-129, His-334, and Asn-358 contribute to the active site. Residues 418–586 (ADALESDKLQ…KRNLSEEAEN (169 aa)) form a domain III region. Residues 587–649 (TISVDRPVKK…RPGHTDQESE (63 aa)) are linker. The tract at residues 603–651 (IFVSDRANSNKELGVDQEAEEGKDKTGPDKQGESPQPRPGHTDQESEEQ) is disordered. Residues 622–634 (EEGKDKTGPDKQG) are compositionally biased toward basic and acidic residues. EF-hand domains are found at residues 649-683 (EEQQ…VVNK), 692-725 (FTLE…KKIK), 722-757 (KKIK…AGFH), and 787-821 (VRLE…TMYA). Positions 650-820 (EQQQFRNIFR…VLEWLQLTMY (171 aa)) are domain IV. Positions 662, 665, 667, 672, 705, 707, 709, 711, 716, 735, 737, 739, 741, 746, 800, 802, 804, and 806 each coordinate Ca(2+).

This sequence belongs to the peptidase C2 family. As to quaternary structure, homodimer; via EF-hand domain 4. Interacts with TTN/titin. Interacts with CMYA5; this interaction, which results in CMYA5 proteolysis, may protect CAPN3 from autolysis. Interacts with SIMC1. Interacts with UTP25; the interaction is required for CAPN3 translocation to the nucleolus. Skeletal muscle.

It is found in the cytoplasm. The protein localises to the nucleus. It localises to the nucleolus. The catalysed reaction is Broad endopeptidase activity.. Activated by micromolar concentrations of calcium and inhibited by calpastatin. Calcium-regulated non-lysosomal thiol-protease. Proteolytically cleaves CTBP1 at 'His-399'. Mediates, with UTP25, the proteasome-independent degradation of p53/TP53. The chain is Calpain-3 (Capn3) from Rattus norvegicus (Rat).